Reading from the N-terminus, the 193-residue chain is Ion-translocating oxidoreductase complex subunit B (193 aa).

Residues 1–26 (MSTMLIAVILLTLLALFFGVLLGFAA) are hydrophobic. In terms of domain architecture, 4Fe-4S spans 32–90 (EGNPIVDELEAILPQTQCGQCGYPGCRPYAEAIANGDKVNKCPPGGTATMEKLASLMGV). [4Fe-4S] cluster-binding residues include Cys-49, Cys-52, Cys-57, Cys-73, Cys-114, Cys-117, Cys-120, Cys-124, Cys-144, Cys-147, Cys-150, and Cys-154. 4Fe-4S ferredoxin-type domains lie at 105–134 (KVAYIREDECIGCTKCIQACPVDAIIGAGK) and 136–164 (MHTVLTADCTGCDLCVEPCPVDCIDMLPV).

The protein belongs to the 4Fe4S bacterial-type ferredoxin family. RnfB subfamily. In terms of assembly, the complex is composed of six subunits: RnfA, RnfB, RnfC, RnfD, RnfE and RnfG. [4Fe-4S] cluster serves as cofactor.

Its subcellular location is the cell inner membrane. Part of a membrane-bound complex that couples electron transfer with translocation of ions across the membrane. This chain is Ion-translocating oxidoreductase complex subunit B, found in Shewanella sp. (strain MR-4).